Here is a 299-residue protein sequence, read N- to C-terminus: Protoheme IX farnesyltransferase (299 aa).

Transmembrane regions (helical) follow at residues 25 to 45 (VVLL…RAGV), 47 to 67 (WTVL…AAAV), 95 to 115 (AAAL…LLTF), 119 to 139 (LAAW…TGFL), 147 to 167 (IVIG…AVTG), 173 to 193 (PLLL…ALAI), 218 to 238 (VHIL…FAIH), 243 to 263 (LYLA…IALY), and 277 to 297 (FSIW…YLLL).

The protein belongs to the UbiA prenyltransferase family. Protoheme IX farnesyltransferase subfamily.

The protein localises to the cell inner membrane. The enzyme catalyses heme b + (2E,6E)-farnesyl diphosphate + H2O = Fe(II)-heme o + diphosphate. It functions in the pathway porphyrin-containing compound metabolism; heme O biosynthesis; heme O from protoheme: step 1/1. In terms of biological role, converts heme B (protoheme IX) to heme O by substitution of the vinyl group on carbon 2 of heme B porphyrin ring with a hydroxyethyl farnesyl side group. This chain is Protoheme IX farnesyltransferase, found in Stutzerimonas stutzeri (strain A1501) (Pseudomonas stutzeri).